The following is a 135-amino-acid chain: Cilia- and flagella-associated protein 144 (135 aa).

The tract at residues 76–100 (QGPKKKYSETQTEAQEIGWDPNPLI) is disordered.

The protein belongs to the CFAP144 family. In terms of assembly, microtubule inner protein component of sperm flagellar doublet microtubules. Predominantly expressed in tissues containing motile cilia.

It localises to the cytoplasm. The protein localises to the cytoskeleton. The protein resides in the cilium axoneme. Its subcellular location is the flagellum axoneme. The polypeptide is Cilia- and flagella-associated protein 144 (Mus musculus (Mouse)).